The following is a 458-amino-acid chain: Secretion-regulating guanine nucleotide exchange factor (458 aa).

RCC1 repeat units follow at residues 15–67 (AALF…VTDG), 68–119 (GDLF…LTEN), 120–171 (GQVL…ATAS), 172–230 (GIVF…LTDA), 231–283 (GEVY…QTET), 284–351 (GKMF…IIGG), and 352–402 (VCYS…LCQL). Positions 420-458 (DAIEDTESQKAMDKERNWKERQSETSTQSQSDWSRNGGL) are disordered. A compositionally biased stretch (basic and acidic residues) spans 426–442 (ESQKAMDKERNWKERQS). S427 carries the post-translational modification Phosphoserine.

As to quaternary structure, interacts with SEC5. The interaction occurs only in the presence of magnesium or manganese and is stimulated by dCTP or GTP.

The protein localises to the cytoplasm. Its subcellular location is the nucleus. Probable guanine nucleotide exchange factor (GEF), which may be involved in the secretion process. The protein is Secretion-regulating guanine nucleotide exchange factor (SERGEF) of Homo sapiens (Human).